A 219-amino-acid chain; its full sequence is Lipid A acyltransferase PagP (219 aa).

The first 28 residues, 1-28, serve as a signal peptide directing secretion; it reads MRLILISHSRLFALSALFLIPTFDSLSA. The interval 39–63 is disordered; it reads IDRTTQSDSTTQRDSKTRRDPAPSF. The span at 49 to 59 shows a compositional bias: basic and acidic residues; the sequence is TQRDSKTRRDP. Residues H91, D134, and S135 contribute to the active site.

This sequence belongs to the lipid A palmitoyltransferase family. Homodimer.

The protein localises to the cell outer membrane. The catalysed reaction is a lipid A + a 1,2-diacyl-sn-glycero-3-phosphocholine = a hepta-acyl lipid A + a 2-acyl-sn-glycero-3-phosphocholine. It carries out the reaction a lipid IVA + a 1,2-diacyl-sn-glycero-3-phosphocholine = a lipid IVB + a 2-acyl-sn-glycero-3-phosphocholine. The enzyme catalyses a lipid IIA + a 1,2-diacyl-sn-glycero-3-phosphocholine = a lipid IIB + a 2-acyl-sn-glycero-3-phosphocholine. Its function is as follows. Transfers a fatty acid residue from the sn-1 position of a phospholipid to the N-linked hydroxyfatty acid chain on the proximal unit of lipid A or its precursors. This Dickeya zeae (strain Ech586) (Dickeya dadantii (strain Ech586)) protein is Lipid A acyltransferase PagP.